Consider the following 333-residue polypeptide: Viral cathepsin (333 aa).

An N-terminal signal peptide occupies residues Met1–Ala20. Positions Leu21 to Leu124 are cleaved as a propeptide — activation peptide. Cystine bridges form between Cys145–Cys186, Cys179–Cys219, and Cys272–Cys321. Cys148 is a catalytic residue. Residue Asn170 is glycosylated (N-linked (GlcNAc...) asparagine; by host). Catalysis depends on residues His280 and Asn300.

The protein belongs to the peptidase C1 family. In terms of processing, synthesized as an inactive proenzyme and activated by proteolytic removal of the inhibitory propeptide.

It catalyses the reaction Endopeptidase of broad specificity, hydrolyzing substrates of both cathepsin L and cathepsin B.. Functionally, cysteine protease that plays an essential role in host liquefaction to facilitate horizontal transmission of the virus. May participate in the degradation of foreign protein expressed by the baculovirus system. This Cydia pomonella granulosis virus (isolate Mexico/1963) (CpGV) protein is Viral cathepsin (VCATH).